A 153-amino-acid polypeptide reads, in one-letter code: Ribosome maturation factor RimP (153 aa).

The protein belongs to the RimP family.

It is found in the cytoplasm. Required for maturation of 30S ribosomal subunits. This chain is Ribosome maturation factor RimP, found in Marinobacter nauticus (strain ATCC 700491 / DSM 11845 / VT8) (Marinobacter aquaeolei).